A 392-amino-acid chain; its full sequence is Heat-inducible transcription repressor HrcA (392 aa).

This sequence belongs to the HrcA family.

Its function is as follows. Negative regulator of class I heat shock genes (grpE-dnaK-dnaJ and groELS operons). Prevents heat-shock induction of these operons. The polypeptide is Heat-inducible transcription repressor HrcA (Chlamydia muridarum (strain MoPn / Nigg)).